The sequence spans 215 residues: MKKPYRKISDYAIVGGLSALVMVSIVGCKSNADDKPKEQSSLSQSVQKGAFVILEEQKDKSYKVVEEYPSSRTHIIVRDLQGNERVLSNEEIQKLIKEEEAKIDNGTSKLVQPNNGGSNEGSGFGLGSAILGSAAGAILGSYIGNKLFNNPNYQQNAQRTYKSPQAYQRSQNSFSKSAPSASSMGGASKGQSGFFGSSRPTSSPAVSSGTRGFNS.

Residues 1 to 27 form the signal peptide; the sequence is MKKPYRKISDYAIVGGLSALVMVSIVG. The N-palmitoyl cysteine moiety is linked to residue C28. C28 is lipidated: S-diacylglycerol cysteine. Residues 158–169 are compositionally biased toward polar residues; the sequence is QRTYKSPQAYQR. The segment at 158–215 is disordered; sequence QRTYKSPQAYQRSQNSFSKSAPSASSMGGASKGQSGFFGSSRPTSSPAVSSGTRGFNS. Positions 170 to 208 are enriched in low complexity; it reads SQNSFSKSAPSASSMGGASKGQSGFFGSSRPTSSPAVSS.

Belongs to the UPF0323 family.

Its subcellular location is the cell membrane. The protein is UPF0323 lipoprotein HP_0232 of Helicobacter pylori (strain ATCC 700392 / 26695) (Campylobacter pylori).